The sequence spans 471 residues: 3-isopropylmalate dehydratase large subunit (471 aa).

Residues C347, C407, and C410 each contribute to the [4Fe-4S] cluster site.

The protein belongs to the aconitase/IPM isomerase family. LeuC type 1 subfamily. As to quaternary structure, heterodimer of LeuC and LeuD. [4Fe-4S] cluster serves as cofactor.

It catalyses the reaction (2R,3S)-3-isopropylmalate = (2S)-2-isopropylmalate. Its pathway is amino-acid biosynthesis; L-leucine biosynthesis; L-leucine from 3-methyl-2-oxobutanoate: step 2/4. Functionally, catalyzes the isomerization between 2-isopropylmalate and 3-isopropylmalate, via the formation of 2-isopropylmaleate. In Buchnera aphidicola subsp. Acyrthosiphon pisum (strain APS) (Acyrthosiphon pisum symbiotic bacterium), this protein is 3-isopropylmalate dehydratase large subunit.